The primary structure comprises 171 residues: 3-hydroxydecanoyl-[acyl-carrier-protein] dehydratase (171 aa).

His-70 is an active-site residue.

Belongs to the thioester dehydratase family. FabA subfamily. Homodimer.

It is found in the cytoplasm. The enzyme catalyses a (3R)-hydroxyacyl-[ACP] = a (2E)-enoyl-[ACP] + H2O. The catalysed reaction is (3R)-hydroxydecanoyl-[ACP] = (2E)-decenoyl-[ACP] + H2O. It catalyses the reaction (2E)-decenoyl-[ACP] = (3Z)-decenoyl-[ACP]. Its pathway is lipid metabolism; fatty acid biosynthesis. Functionally, necessary for the introduction of cis unsaturation into fatty acids. Catalyzes the dehydration of (3R)-3-hydroxydecanoyl-ACP to E-(2)-decenoyl-ACP and then its isomerization to Z-(3)-decenoyl-ACP. Can catalyze the dehydratase reaction for beta-hydroxyacyl-ACPs with saturated chain lengths up to 16:0, being most active on intermediate chain length. The chain is 3-hydroxydecanoyl-[acyl-carrier-protein] dehydratase from Shewanella baltica (strain OS223).